We begin with the raw amino-acid sequence, 305 residues long: Serine/threonine-protein kinase 16 (305 aa).

A lipid anchor (N-myristoyl glycine) is attached at G2. Residues C6 and C8 are each lipidated (S-palmitoyl cysteine). A Protein kinase domain is found at Y20–L293. ATP is bound by residues L26 to V34 and K49. D148 acts as the Proton acceptor in catalysis. Residues D166–E202 form an activation loop region. S197 is subject to Phosphoserine; by autocatalysis. Phosphotyrosine; by autocatalysis is present on Y198.

It belongs to the protein kinase superfamily. Ser/Thr protein kinase family. In terms of assembly, monomer. Interacts with DRG1 (via its N-terminal); the interaction phosphorylates DRG1. Mainly autophosphorylated on serine/threonine residues. Also autophosphorylated on Tyr-198. In terms of tissue distribution, expressed in heart, liver, brain, spleen, lung, skeletal muscle, kidney and testis.

Its subcellular location is the cytoplasm. It is found in the perinuclear region. The protein resides in the membrane. It catalyses the reaction L-seryl-[protein] + ATP = O-phospho-L-seryl-[protein] + ADP + H(+). The enzyme catalyses L-threonyl-[protein] + ATP = O-phospho-L-threonyl-[protein] + ADP + H(+). The catalysed reaction is L-tyrosyl-[protein] + ATP = O-phospho-L-tyrosyl-[protein] + ADP + H(+). Membrane-associated protein kinase that phosphorylates on serine and threonine residues. In vitro substrates include DRG1, ENO1 and EIF4EBP1. Also autophosphorylates. May be involved in secretory vesicle trafficking or intracellular signaling. May have a role in regulating stromal-epithelial interactions that occur during ductal morphogenesis in the mammary gland. May be involved in TGF-beta signaling. Able to autophosphorylate on Tyr residue; it is however unclear whether it has tyrosine-protein kinase toward other proteins. The protein is Serine/threonine-protein kinase 16 (Stk16) of Rattus norvegicus (Rat).